The sequence spans 177 residues: CASP-like protein 5A2 (177 aa).

Topologically, residues 1 to 36 (MNASHPAVHPVGVPPAVAGQLPPRMRMKEIQGMPGT) are cytoplasmic. Residues 37 to 57 (IGGLLLRLGQFCFALVAFSIM) traverse the membrane as a helical segment. At 58-68 (VSIENFSTVTA) the chain is on the extracellular side. N-linked (GlcNAc...) asparagine glycosylation occurs at Asn62. Residues 69-89 (FCYLVAATVLQCLWSLALAII) traverse the membrane as a helical segment. The Cytoplasmic portion of the chain corresponds to 90–103 (DGYALLVKRSLRNS). Residues 104-124 (LLVSLLVVGDGVTATLTFAAA) traverse the membrane as a helical segment. Over 125-153 (CASAGITVLIGNDLRQCKENHCARYETAT) the chain is Extracellular. A helical membrane pass occupies residues 154–174 (ALAFLSWFMVSLSFILTFWLL). The Cytoplasmic segment spans residues 175–177 (ATR).

It belongs to the Casparian strip membrane proteins (CASP) family. Homodimer and heterodimers.

It is found in the cell membrane. The sequence is that of CASP-like protein 5A2 from Ginkgo biloba (Ginkgo).